A 157-amino-acid chain; its full sequence is Thioredoxin 2 (157 aa).

A signal peptide spans 1 to 23 (MKKYIFFFLFSFINFFFVYDVTC). A Thioredoxin domain is found at 46–157 (LRMFKKVPRL…DLIALIKKHL (112 aa)). Active-site nucleophile residues include cysteine 82 and cysteine 85. Cysteines 82 and 85 form a disulfide.

The protein belongs to the thioredoxin family. In terms of assembly, monomer. Component of the Plasmodium translocon of exported proteins (PTEX) complex composed of HSP101, EXP2, PTEX150, PTEX88 and TRX2. In terms of processing, the disulfide bond between Cys-82 and Cys-85 acts as a redox-active center and is reduced by thioredoxin reductase TRXR.

The protein localises to the parasitophorous vacuole membrane. Functionally, participates in various redox reactions through the reversible oxidation of its active center dithiol to a disulfide and catalyzes dithiol-disulfide exchange reactions. As part of the translocon PTEX complex, plays a role in the export of parasite proteins into the host erythrocyte. The translocon PTEX complex is a multi-protein machinery resident in the parasite parasitophorous vacuolar membrane, responsible for protein secretion into host cells. May contribute to the unfolding of proteins containing the PEXEL localization motif before their passage through the translocon or regulate the PTEX complex function. In Plasmodium falciparum (isolate 3D7), this protein is Thioredoxin 2.